The primary structure comprises 230 residues: Demethylmenaquinone methyltransferase (230 aa).

Residues Thr-62, Asp-80, 102–103 (DG), and Ser-119 contribute to the S-adenosyl-L-methionine site.

The protein belongs to the class I-like SAM-binding methyltransferase superfamily. MenG/UbiE family.

The catalysed reaction is a 2-demethylmenaquinol + S-adenosyl-L-methionine = a menaquinol + S-adenosyl-L-homocysteine + H(+). It functions in the pathway quinol/quinone metabolism; menaquinone biosynthesis; menaquinol from 1,4-dihydroxy-2-naphthoate: step 2/2. Its function is as follows. Methyltransferase required for the conversion of demethylmenaquinol (DMKH2) to menaquinol (MKH2). The sequence is that of Demethylmenaquinone methyltransferase from Streptomyces griseus subsp. griseus (strain JCM 4626 / CBS 651.72 / NBRC 13350 / KCC S-0626 / ISP 5235).